A 396-amino-acid polypeptide reads, in one-letter code: Tryptophan synthase beta chain (396 aa).

The residue at position 86 (Lys86) is an N6-(pyridoxal phosphate)lysine.

It belongs to the TrpB family. In terms of assembly, tetramer of two alpha and two beta chains. Pyridoxal 5'-phosphate serves as cofactor.

The catalysed reaction is (1S,2R)-1-C-(indol-3-yl)glycerol 3-phosphate + L-serine = D-glyceraldehyde 3-phosphate + L-tryptophan + H2O. It participates in amino-acid biosynthesis; L-tryptophan biosynthesis; L-tryptophan from chorismate: step 5/5. In terms of biological role, the beta subunit is responsible for the synthesis of L-tryptophan from indole and L-serine. The chain is Tryptophan synthase beta chain from Vibrio campbellii (strain ATCC BAA-1116).